Consider the following 119-residue polypeptide: E3 ubiquitin-protein ligase PPP1R11 (119 aa).

The segment at 1-42 is disordered; it reads MAESSGPTAGGGATSSTVTTESDTQPEHRSLTLKLRKRKPDK. 2 atypical RING finger domain regions span residues 55–65 and 87–96; these read NLGRRSSKCCC and CESAHCIRGH. A disordered region spans residues 96–119; sequence HKKATSGSKETPSSHHDKTGSMQH. Basic and acidic residues predominate over residues 107–119; the sequence is PSSHHDKTGSMQH.

It catalyses the reaction S-ubiquitinyl-[E2 ubiquitin-conjugating enzyme]-L-cysteine + [acceptor protein]-L-lysine = [E2 ubiquitin-conjugating enzyme]-L-cysteine + N(6)-ubiquitinyl-[acceptor protein]-L-lysine.. The protein operates within protein modification; protein ubiquitination. In terms of biological role, atypical E3 ubiquitin-protein ligase which ubiquitinates TLR2 at 'Lys-754' leading to its degradation by the proteasome. Inhibitor of protein phosphatase 1. The protein is E3 ubiquitin-protein ligase PPP1R11 (ppp1r11) of Xenopus tropicalis (Western clawed frog).